The primary structure comprises 76 residues: MFTLKKSMLLLFFLGTISLSLCEEERNADEDDGEKEVKRGIFALIKTAAKFVGKNLLRQAGKAGLEHLACKANNQC.

The signal sequence occupies residues 1–22; the sequence is MFTLKKSMLLLFFLGTISLSLC. A propeptide spans 23-37 (removed in mature form); the sequence is EEERNADEDDGEKEV. Residues cysteine 70 and cysteine 76 are joined by a disulfide bond.

This sequence belongs to the frog skin active peptide (FSAP) family. Esculentin subfamily. As to expression, expressed by the skin glands.

Its subcellular location is the secreted. Antimicrobial peptide. The polypeptide is Esculentin-2MT3 (Amolops mantzorum (Sichuan torrent frog)).